A 180-amino-acid polypeptide reads, in one-letter code: MDVTAEAKQIMVQALGKMYSSRSQRGGLRLHRSLLLTLVMKSARDIYHSARLMSEKSGQSVTEECTSHTQEPMDTSSSTATPLRETSGQSSEDGQRSGLEGHPHPLNPAADKENCGPSRPDRHSRKRRSKTATDSDFIPCKKAKLECAEVRGVLQNSSANCGRALDSLSLVPMPRTIVTF.

The segment at 53 to 135 is disordered; that stretch reads MSEKSGQSVT…KRRSKTATDS (83 aa). The span at 56–92 shows a compositional bias: polar residues; that stretch reads KSGQSVTEECTSHTQEPMDTSSSTATPLRETSGQSSE. Residues 93–103 are compositionally biased toward basic and acidic residues; that stretch reads DGQRSGLEGHP.

This sequence belongs to the IER family. As to quaternary structure, interacts with FIBPB.

It localises to the nucleus. It is found in the cytoplasm. In terms of biological role, DNA-binding protein that seems to act as a transcription factor. Mediates with FIBPB FGF-signaling in Kupffer's vesicle ciliogenesis and in the establishment of laterality in the embryo. The protein is Immediate early response gene 2 protein of Danio rerio (Zebrafish).